The following is a 341-amino-acid chain: Phenylalanine--tRNA ligase alpha subunit (341 aa).

Position 254 (Glu254) interacts with Mg(2+).

It belongs to the class-II aminoacyl-tRNA synthetase family. Phe-tRNA synthetase alpha subunit type 1 subfamily. As to quaternary structure, tetramer of two alpha and two beta subunits. The cofactor is Mg(2+).

The protein localises to the cytoplasm. It catalyses the reaction tRNA(Phe) + L-phenylalanine + ATP = L-phenylalanyl-tRNA(Phe) + AMP + diphosphate + H(+). In Chlorobium phaeovibrioides (strain DSM 265 / 1930) (Prosthecochloris vibrioformis (strain DSM 265)), this protein is Phenylalanine--tRNA ligase alpha subunit.